Consider the following 1480-residue polypeptide: C-type mannose receptor 2 (1480 aa).

Positions 1–30 (MGPIRPALAPWPRHLLRCVLLLGGLRLGHP) are cleaved as a signal peptide. Over 31-1413 (ADSAAALLEP…SAALPENPVA (1383 aa)) the chain is Extracellular. In terms of domain architecture, Ricin B-type lectin spans 40 to 166 (PDVFLIFSQG…WNIYGSEEDL (127 aa)). Intrachain disulfides connect cysteine 53-cysteine 67 and cysteine 92-cysteine 111. Residues asparagine 101 and asparagine 139 are each glycosylated (N-linked (GlcNAc...) asparagine). The 49-residue stretch at 181-229 (SHGKPCTIPFKYDNQWFHGCTSTGREDGHLWCATTQDYGKDERWGFCPI) folds into the Fibronectin type-II domain. Disulfide bonds link cysteine 186-cysteine 212, cysteine 200-cysteine 227, cysteine 265-cysteine 358, and cysteine 334-cysteine 350. Positions 243–359 (LTDSCYQFNF…CSIALPYVCK (117 aa)) constitute a C-type lectin 1 domain. An N-linked (GlcNAc...) asparagine glycan is attached at asparagine 363. 7 C-type lectin domains span residues 388–504 (FQGH…SICK), 527–643 (HSPS…RYIC), 677–808 (KLRH…WICK), 831–950 (FQEA…YICK), 978–1106 (FLNK…GFIC), 1131–1242 (YLNR…GAVC), and 1271–1391 (FREH…GVVC). 7 cysteine pairs are disulfide-bonded: cysteine 409-cysteine 503, cysteine 480-cysteine 495, cysteine 617-cysteine 634, cysteine 703-cysteine 807, cysteine 784-cysteine 799, cysteine 852-cysteine 949, and cysteine 926-cysteine 941. Asparagine 1028 is a glycosylation site (N-linked (GlcNAc...) asparagine). A disulfide bridge links cysteine 1077 with cysteine 1097. A Glycyl lysine isopeptide (Lys-Gly) (interchain with G-Cter in SUMO1) cross-link involves residue lysine 1141. An intrachain disulfide couples cysteine 1219 to cysteine 1233. Asparagine 1348 carries an N-linked (GlcNAc...) asparagine glycan. A disulfide bridge links cysteine 1367 with cysteine 1382. Residues 1414 to 1434 (LVVVLTAAVLLLLALLTGALI) form a helical membrane-spanning segment. Residues 1435–1480 (LYRRRQSAERGSFEGARYSRSSRSGPAEATEKNILVSDMEMNEQQE) lie on the Cytoplasmic side of the membrane. The interval 1446–1480 (SFEGARYSRSSRSGPAEATEKNILVSDMEMNEQQE) is disordered.

Interacts directly with PLAUR/UPAR and PLAU/pro-UPA to form a tri-molecular complex. Interacts with collagen V. Interacts with C-terminal region of type I collagen/COL1A1. Post-translationally, N-glycosylated. Phosphorylated.

It localises to the cell membrane. Its function is as follows. May play a role as endocytotic lectin receptor displaying calcium-dependent lectin activity. Internalizes glycosylated ligands from the extracellular space for release in an endosomal compartment via clathrin-mediated endocytosis. May be involved in plasminogen activation system controlling the extracellular level of PLAUR/PLAU, and thus may regulate protease activity at the cell surface. May contribute to cellular uptake, remodeling and degradation of extracellular collagen matrices. May participate in remodeling of extracellular matrix cooperating with the matrix metalloproteinases (MMPs) secreted by hepatic stellate cells. May mediate endocytosis of partially degraded collagens and glycoproteins produced in the extracellular matrix by MMPs. The protein is C-type mannose receptor 2 (Mrc2) of Rattus norvegicus (Rat).